The sequence spans 523 residues: 11-oxo-beta-amyrin 30-oxidase (523 aa).

Residues 9–29 (AIWVVLTVILAAIPIWVCHMV) form a helical membrane-spanning segment. C471 lines the heme pocket.

The protein belongs to the cytochrome P450 family. Requires heme as cofactor. In terms of tissue distribution, expressed in roots, stolons and stems. Not detected in leaves.

It localises to the membrane. The catalysed reaction is 11-oxo-beta-amyrin + 3 reduced [NADPH--hemoprotein reductase] + 3 O2 = glycyrrhetinate + 3 oxidized [NADPH--hemoprotein reductase] + 4 H2O + 4 H(+). It carries out the reaction 11-oxo-beta-amyrin + reduced [NADPH--hemoprotein reductase] + O2 = 30-hydroxy-11-oxo-beta-amyrin + oxidized [NADPH--hemoprotein reductase] + H2O + H(+). It catalyses the reaction 30-hydroxy-11-oxo-beta-amyrin + reduced [NADPH--hemoprotein reductase] + O2 = glycyrrhetaldehyde + oxidized [NADPH--hemoprotein reductase] + 2 H2O + H(+). The enzyme catalyses glycyrrhetaldehyde + reduced [NADPH--hemoprotein reductase] + O2 = glycyrrhetinate + oxidized [NADPH--hemoprotein reductase] + H2O + 2 H(+). Functionally, involved in the biosynthesis of Glycyrrhetinic acid (GA), a natural product which exhibits anti-inflammatory activity. Involved in the biosynthesis of the triterpenoid saponin glycyrrhizin. Catalyzes three sequential oxidation steps at C-30 of 11-oxo-beta-amyrin. Also able to catalyze C-30 monohydroxylation of beta-amyrin to produce 30-hydroxy-beta-amyrin. May be also responsible for the oxidation at positions C-22 and C-29 in addition to C-30. The chain is 11-oxo-beta-amyrin 30-oxidase from Glycyrrhiza uralensis (Chinese licorice).